The primary structure comprises 185 residues: Ribosome-recycling factor (185 aa).

The protein belongs to the RRF family.

Its subcellular location is the cytoplasm. Functionally, responsible for the release of ribosomes from messenger RNA at the termination of protein biosynthesis. May increase the efficiency of translation by recycling ribosomes from one round of translation to another. This is Ribosome-recycling factor from Pseudomonas savastanoi pv. phaseolicola (strain 1448A / Race 6) (Pseudomonas syringae pv. phaseolicola (strain 1448A / Race 6)).